The primary structure comprises 441 residues: tRNA (adenine(37)-N6)-methyltransferase (441 aa).

The 139-residue stretch at 30 to 168 (TEPVGYLESC…YIAEYDSPQN (139 aa)) folds into the TsaA-like domain. S-adenosyl-L-methionine-binding positions include 47–49 (PRQ), 90–91 (HK), arginine 117, leucine 127, and 148–151 (IHGT). Polar residues predominate over residues 179 to 192 (QNNQHTPNTVSQSD). Disordered regions lie at residues 179 to 231 (QNNQ…EENY) and 264 to 284 (SSVAEEQIGPYCPEKSFSEKG).

This sequence belongs to the tRNA methyltransferase O family.

The catalysed reaction is N(6)-L-threonylcarbamoyladenosine(37) in tRNA + S-adenosyl-L-methionine = N(6)-methyl,N(6)-L-threonylcarbamoyladenosine(37) in tRNA + S-adenosyl-L-homocysteine + H(+). Functionally, S-adenosyl-L-methionine-dependent methyltransferase responsible for the addition of the methyl group in the formation of N6-methyl-N6-threonylcarbamoyladenosine at position 37 (m(6)t(6)A37) of the tRNA anticodon loop of tRNA(Ser)(GCU). The methyl group of m(6)t(6)A37 may improve the efficiency of the tRNA decoding ability. The polypeptide is tRNA (adenine(37)-N6)-methyltransferase (Homo sapiens (Human)).